Consider the following 325-residue polypeptide: Neisseria adhesin A (325 aa).

The signal sequence occupies residues methionine 1–alanine 23. Residues aspartate 24–alanine 137 form a head domain region. Positions leucine 86–asparagine 135 form a coiled coil. Positions isoleucine 139–glutamate 231 are coiled stalk domain. The segment at histidine 232–glycine 270 is outer membrane translocation of the passenger domain. Transmembrane regions (beta stranded) follow at residues glycine 270–glycine 280, glutamate 284–phenylalanine 295, lysine 302–glycine 308, and serine 314–tryptophan 325. A translocator domain region spans residues arginine 271–tryptophan 325.

It belongs to the autotransporter-2 (AT-2) (TC 1.B.40) family. In terms of assembly, homotrimer.

Its subcellular location is the cell surface. It is found in the cell outer membrane. In terms of biological role, an antigenic bacterial cell surface protein that adheres to and induces bacterial uptake by human epithelial cells. The chain is Neisseria adhesin A from Neisseria meningitidis serogroup B.